A 457-amino-acid polypeptide reads, in one-letter code: MALWGGRFTQAADQRFKQFNDSLRFDYRLAEQDIVGSVAWSKALVTVGVLTAEEQAQLEEALNVLLEDVRARPQQILESDAEDIHSWVEGKLIDKVGQLGKKLHTGRSRNDQVATDLKLWCKDTVSELLTANRQLQSALVETAQNNQDAVMPGYTHLQRAQPVTFAHWCLAYVEMLARDESRLQDALKRLDVSPLGCGALAGTAYEIDREQLAGWLGFASATRNSLDSVSDRDHVLELLSAAAIGMVHLSRFAEDLIFFNTGEAGFVELSDRVTSGSSLMPQKKNPDALELIRGKCGRVQGALTGMMMTLKGLPLAYNKDMQEDKEGLFDALDTWLDCLHMAALVLDGIQVKRPRCQEAAQQGYANATELADYLVAKGVPFREAHHIVGEAVVEAIRQGKPLEDLPLSELQKFSQVIGEDVYPILSLQSCLDKRAAKGGVSPQQVAQAIAFAQARLG.

Belongs to the lyase 1 family. Argininosuccinate lyase subfamily.

Its subcellular location is the cytoplasm. The enzyme catalyses 2-(N(omega)-L-arginino)succinate = fumarate + L-arginine. It functions in the pathway amino-acid biosynthesis; L-arginine biosynthesis; L-arginine from L-ornithine and carbamoyl phosphate: step 3/3. This chain is Argininosuccinate lyase, found in Escherichia coli O7:K1 (strain IAI39 / ExPEC).